The primary structure comprises 1001 residues: DNA topoisomerase 3-alpha (1001 aa).

A Toprim domain is found at 35 to 179; sequence KVLCVAEKND…NLQVLRARFS (145 aa). The Topo IA-type catalytic domain maps to 197–617; that stretch reads DQRVSDAVDV…QQVQKYKQVF (421 aa). Y362 (O-(5'-phospho-DNA)-tyrosine intermediate) is an active-site residue. Residues 400–424 are disordered; it reads GGPTPRNGNKSDQAHPPIHPTKYTN. Residues 658 to 685 form a C4-type zinc finger; sequence CPQCNKDMVLKTKKNGGFYLSCMGFPEC. Positions 774-792 are enriched in polar residues; the sequence is RMDNSQHPQPADSRQTGSS. The segment at 774–810 is disordered; the sequence is RMDNSQHPQPADSRQTGSSKALAQTLPPPTAAGESNS. Residues C813, C815, C838, C843, C897, C899, C922, and C930 each coordinate Zn(2+). 2 consecutive GRF-type zinc fingers follow at residues 813–852 and 897–939; these read CNCG…ADSP and CLCS…VDEN. A disordered region spans residues 937–1001; sequence DENTAPGTSG…HTRPFCPQNR (65 aa). A compositionally biased stretch (basic and acidic residues) spans 953–964; it reads DRGRTLESEARS.

Belongs to the type IA topoisomerase family. Binds ssDNA. Interacts (via N-terminal region) with BLM; the interaction is direct. Directly interacts with RMI1. Component of the RMI complex, containing at least TOP3A, RMI1 and RMI2. The RMI complex interacts with BLM. Requires Mg(2+) as cofactor. As to expression, high expression is found in testis, heart, skeletal muscle and pancreas.

The protein localises to the mitochondrion matrix. The enzyme catalyses ATP-independent breakage of single-stranded DNA, followed by passage and rejoining.. Its function is as follows. Releases the supercoiling and torsional tension of DNA introduced during the DNA replication and transcription by transiently cleaving and rejoining one strand of the DNA duplex. Introduces a single-strand break via transesterification at a target site in duplex DNA. The scissile phosphodiester is attacked by the catalytic tyrosine of the enzyme, resulting in the formation of a DNA-(5'-phosphotyrosyl)-enzyme intermediate and the expulsion of a 3'-OH DNA strand. The free DNA strand then undergoes passage around the unbroken strand thus removing DNA supercoils. Finally, in the religation step, the DNA 3'-OH attacks the covalent intermediate to expel the active-site tyrosine and restore the DNA phosphodiester backbone. As an essential component of the RMI complex it is involved in chromosome separation and the processing of homologous recombination intermediates to limit DNA crossover formation in cells. Has DNA decatenation activity. It is required for mtDNA decatenation and segregation after completion of replication, in a process that does not require BLM, RMI1 and RMI2. In Homo sapiens (Human), this protein is DNA topoisomerase 3-alpha (TOP3A).